The sequence spans 308 residues: MPQDKLRIATRRSPLAMWQAEHVAAELRRHHPGLEVELVPMVTRGDRILDQALSRIGGKGLFIKELEQGMEEGRADLAVHSMKDVPWRMPDGFALPVILERHEPTDAFVSNHYRRLDDLPEGGHLGTASLRRQCQAKARRPDLRVSTLRGNVNTRLAKLDAGEFDAIILAASGLSRLGFDERIARRLPPEESLPAVGQGALGIECLAEDRRVQELVAPLDHGPTHTLLKAERAMNARLQGSCQVPIAGYACYQGEEIWLRGLVGSPDGQEIVRGEVRGPIAQAAELGDRLGGELLERGAARILADLAD.

Cys242 is modified (S-(dipyrrolylmethanemethyl)cysteine).

The protein belongs to the HMBS family. Monomer. It depends on dipyrromethane as a cofactor.

The catalysed reaction is 4 porphobilinogen + H2O = hydroxymethylbilane + 4 NH4(+). It participates in porphyrin-containing compound metabolism; protoporphyrin-IX biosynthesis; coproporphyrinogen-III from 5-aminolevulinate: step 2/4. Functionally, tetrapolymerization of the monopyrrole PBG into the hydroxymethylbilane pre-uroporphyrinogen in several discrete steps. The sequence is that of Porphobilinogen deaminase from Alkalilimnicola ehrlichii (strain ATCC BAA-1101 / DSM 17681 / MLHE-1).